The sequence spans 386 residues: MSTLVQCGYFERGQCQSCRHIKLPMVQQLAAKTQELQQLLAPFVVSTNTQFLPPVVGEDSGFRNKAKMVVLGAAHAPVLGIVSPNGEAVSLCDCLLYPADMQALLYRLERFVQQAGIPPYRIDKAKGELKYILLTRSQVRGEYMLRFVLRSPDAIARIERELPALMAEYPQINVVSVNIQPIHMAILEGDEEIFLTENTRLEERFNDVPLFIRPKSFFQTNPHVAAKLYQTAREWVGEFAPKSLWDLFCGVGGFGLHCASKDIPLTGIEIEAEAIACAKMSAQMMGLDNVQFMALDSTDFAKGDAAATKPDLIIVNPPRRGIGESLCDALSEFAPRAILYSSCNPKTLAKDLVHIRGYQLTRVQLFDLFPHSDHFEVLAMLVKDSR.

4 residues coordinate [4Fe-4S] cluster: cysteine 7, cysteine 15, cysteine 18, and cysteine 94. S-adenosyl-L-methionine-binding residues include glutamine 219, phenylalanine 248, glutamate 269, and asparagine 316. The active-site Nucleophile is cysteine 343.

The protein belongs to the class I-like SAM-binding methyltransferase superfamily. RNA M5U methyltransferase family. RlmC subfamily.

It catalyses the reaction uridine(747) in 23S rRNA + S-adenosyl-L-methionine = 5-methyluridine(747) in 23S rRNA + S-adenosyl-L-homocysteine + H(+). Functionally, catalyzes the formation of 5-methyl-uridine at position 747 (m5U747) in 23S rRNA. This chain is 23S rRNA (uracil(747)-C(5))-methyltransferase RlmC, found in Shewanella oneidensis (strain ATCC 700550 / JCM 31522 / CIP 106686 / LMG 19005 / NCIMB 14063 / MR-1).